Here is a 125-residue protein sequence, read N- to C-terminus: NADH dehydrogenase [ubiquinone] 1 beta subcomplex subunit 8, mitochondrial (125 aa).

A mitochondrion-targeting transit peptide spans 1-29; it reads MAGRLSGVASRIMGGNGVVARSVGSSLRQ. Residues 78 to 98 traverse the membrane as a helical segment; sequence ALAWLSGGLGFFVGLGLLAVL.

It belongs to the complex I NDUFB8 subunit family. Complex I is composed of at least 49 different subunits.

The protein localises to the mitochondrion inner membrane. Functionally, accessory subunit of the mitochondrial membrane respiratory chain NADH dehydrogenase (Complex I), that is believed not to be involved in catalysis. Complex I functions in the transfer of electrons from NADH to the respiratory chain. The immediate electron acceptor for the enzyme is believed to be ubiquinone. This Arabidopsis thaliana (Mouse-ear cress) protein is NADH dehydrogenase [ubiquinone] 1 beta subcomplex subunit 8, mitochondrial.